The sequence spans 382 residues: MNNFVKQVASKSLKPTKKLSPSDEVISLNECIISFNLDNFYYCNDGLFTKPINTPEDVLKSLLIMESFAYEKMIIKGLIKILISRAYINDIYFTPFGWLTGVDDDPETHVVIKIIFNSSLISIKSQVIEYLKPYNVNNLSVLTTEKELSINTFNVPDSIPMSIISFFPFDTDFILVILFFGVYNDSYCGISYISPKERLPYIIEILKPLVSEINMLSDEIGRTSSIRIFNSTSVKKFPTNTLTSICEIVYSFDESSFPTPKTFTPLNASPYIPKKIVSLLDLPSNVEIKAISRGGVDFITHINNKRLNTILVIAKDNFLKNSTFSGTFIKENIIWKGIYTYRIIKSSFPVPTIKSVTNKKKICKKHCFVNSQYTTRTLSHIL.

Belongs to the orthopoxvirus OPG082 family.

Its subcellular location is the virion. Its function is as follows. Binds to the hairpin form of the viral telomeric sequence. Might direct genome encapsidation into the virus particle. The sequence is that of Telomere-binding protein OPG082 (OPG082) from Homo sapiens (Human).